A 243-amino-acid chain; its full sequence is Nuclear protein UL4 homolog (243 aa).

The tract at residues 193-226 is disordered; it reads RPDDQTTPTPTPHQYTSQRRQPETNCPSPQPAFF. Positions 205 to 219 are enriched in polar residues; it reads HQYTSQRRQPETNCP.

This sequence belongs to the alphaherpesvirinae HHV-1 UL4 family.

Its subcellular location is the host nucleus. This Varicella-zoster virus (strain Oka vaccine) (HHV-3) protein is Nuclear protein UL4 homolog.